A 194-amino-acid chain; its full sequence is Imidazoleglycerol-phosphate dehydratase (194 aa).

This sequence belongs to the imidazoleglycerol-phosphate dehydratase family.

It is found in the cytoplasm. The enzyme catalyses D-erythro-1-(imidazol-4-yl)glycerol 3-phosphate = 3-(imidazol-4-yl)-2-oxopropyl phosphate + H2O. Its pathway is amino-acid biosynthesis; L-histidine biosynthesis; L-histidine from 5-phospho-alpha-D-ribose 1-diphosphate: step 6/9. This is Imidazoleglycerol-phosphate dehydratase from Chlorobaculum parvum (strain DSM 263 / NCIMB 8327) (Chlorobium vibrioforme subsp. thiosulfatophilum).